The primary structure comprises 130 residues: Large ribosomal subunit protein bL17 (130 aa).

Belongs to the bacterial ribosomal protein bL17 family. Part of the 50S ribosomal subunit. Contacts protein L32.

The polypeptide is Large ribosomal subunit protein bL17 (Azotobacter vinelandii (strain DJ / ATCC BAA-1303)).